We begin with the raw amino-acid sequence, 128 residues long: Holo-[acyl-carrier-protein] synthase (128 aa).

Residues Asp-8 and Glu-60 each contribute to the Mg(2+) site.

The protein belongs to the P-Pant transferase superfamily. AcpS family. Requires Mg(2+) as cofactor.

It localises to the cytoplasm. It carries out the reaction apo-[ACP] + CoA = holo-[ACP] + adenosine 3',5'-bisphosphate + H(+). Functionally, transfers the 4'-phosphopantetheine moiety from coenzyme A to a Ser of acyl-carrier-protein. The chain is Holo-[acyl-carrier-protein] synthase from Anaeromyxobacter dehalogenans (strain 2CP-1 / ATCC BAA-258).